The following is a 220-amino-acid chain: UPF0502 protein CV_4303 (220 aa).

This sequence belongs to the UPF0502 family.

The protein is UPF0502 protein CV_4303 of Chromobacterium violaceum (strain ATCC 12472 / DSM 30191 / JCM 1249 / CCUG 213 / NBRC 12614 / NCIMB 9131 / NCTC 9757 / MK).